A 322-amino-acid chain; its full sequence is Protein mono-ADP-ribosyltransferase PARP16 (322 aa).

Residues 1–287 (MQPSGWAAAR…RASSQLSWFS (287 aa)) are Cytoplasmic-facing. In terms of domain architecture, PARP alpha-helical spans 5 to 91 (GWAAAREAAG…AWDLVSWILS (87 aa)). Asp-37 is modified (ADP-ribosyl aspartic acid). Position 70 is an ADP-ribosyl glutamic acid (Glu-70). The region spanning 94-279 (VLTIHSAGKA…VYSQKPPKRA (186 aa)) is the PARP catalytic domain. N6-(ADP-ribosyl)lysine occurs at positions 110 and 137. 3 residues coordinate NAD(+): His-152, Tyr-182, and Tyr-254. A helical membrane pass occupies residues 288–308 (SHWFTVMISLYLLLLLIVSVI). At 309 to 322 (NSSAFQHFWNRAKR) the chain is on the lumenal side.

This sequence belongs to the ARTD/PARP family. Interacts with KPNB1. Auto-mono-ADP-ribosylated.

It is found in the endoplasmic reticulum membrane. It carries out the reaction L-aspartyl-[protein] + NAD(+) = 4-O-(ADP-D-ribosyl)-L-aspartyl-[protein] + nicotinamide. It catalyses the reaction L-glutamyl-[protein] + NAD(+) = 5-O-(ADP-D-ribosyl)-L-glutamyl-[protein] + nicotinamide. The catalysed reaction is L-lysyl-[protein] + NAD(+) = N(6)-(ADP-D-ribosyl)-L-lysyl-[protein] + nicotinamide + H(+). With respect to regulation, in absence of activation signal, PARP16 is autoinhibited by the PARP alpha-helical domain (also named HD region), which prevents effective NAD(+)-binding. Activity is highly stimulated by signals, which unfold the PARP alpha-helical domain, relieving autoinhibition. In terms of biological role, intracellular mono-ADP-ribosyltransferase that plays a role in different processes, such as protein translation and unfolded protein response (UPR), through the mono-ADP-ribosylation of proteins involved in those processes. Acts as an inhibitor of protein translation by catalyzing mono-ADP-ribosylation of ribosomal subunits, such as RPL14 and RPS6, thereby inhibiting polysome assembly and mRNA loading. Mono-ADP-ribosylation of ribosomal subunits is promoted by NMNAT2. Involved in the unfolded protein response (UPR) by ADP-ribosylating and activating EIF2AK3 and ERN1, two important UPR effectors. May also mediate mono-ADP-ribosylation of karyopherin KPNB1 a nuclear import factor. May not modify proteins on arginine or cysteine residues compared to other mono-ADP-ribosyltransferases. The chain is Protein mono-ADP-ribosyltransferase PARP16 from Homo sapiens (Human).